A 125-amino-acid polypeptide reads, in one-letter code: Small ribosomal subunit protein eS8 (125 aa).

Belongs to the eukaryotic ribosomal protein eS8 family. As to quaternary structure, part of the 30S ribosomal subunit.

This is Small ribosomal subunit protein eS8 from Methanocella arvoryzae (strain DSM 22066 / NBRC 105507 / MRE50).